The chain runs to 487 residues: Mu-like prophage FluMu tail sheath protein (487 aa).

This sequence belongs to the myoviridae tail sheath protein family.

Functionally, major component of the tail. The chain is Mu-like prophage FluMu tail sheath protein from Haemophilus influenzae (strain ATCC 51907 / DSM 11121 / KW20 / Rd).